We begin with the raw amino-acid sequence, 322 residues long: Lymphokine-activated killer T-cell-originated protein kinase (322 aa).

The residue at position 1 (methionine 1) is an N-acetylmethionine. Threonine 9 and threonine 24 each carry phosphothreonine. Serine 32 is subject to Phosphoserine. In terms of domain architecture, Protein kinase spans 32 to 322 (SPFMQKLGFG…HIVEALETDV (291 aa)). 38-46 (LGFGTGVNV) provides a ligand contact to ATP. Position 59 is a phosphoserine (serine 59). Lysine 64 contributes to the ATP binding site. Residue aspartate 167 is the Proton acceptor of the active site. Lysine 169 participates in a covalent cross-link: Glycyl lysine isopeptide (Lys-Gly) (interchain with G-Cter in SUMO2). Residues 320 to 322 (TDV) are PDZ-interaction.

It belongs to the protein kinase superfamily. STE Ser/Thr protein kinase family. MAP kinase kinase subfamily. In terms of assembly, interacts with DLG1 and TP53. In terms of processing, phosphorylated; in a cell-cycle dependent manner at mitosis. In terms of tissue distribution, expressed in the testis and placenta. In the testis, restrictedly expressed in outer cell layer of seminiferous tubules.

It catalyses the reaction L-seryl-[protein] + ATP = O-phospho-L-seryl-[protein] + ADP + H(+). The catalysed reaction is L-threonyl-[protein] + ATP = O-phospho-L-threonyl-[protein] + ADP + H(+). It carries out the reaction L-tyrosyl-[protein] + ATP = O-phospho-L-tyrosyl-[protein] + ADP + H(+). With respect to regulation, activated by phosphorylation. Phosphorylates MAP kinase p38. Seems to be active only in mitosis. May also play a role in the activation of lymphoid cells. When phosphorylated, forms a complex with TP53, leading to TP53 destabilization and attenuation of G2/M checkpoint during doxorubicin-induced DNA damage. This chain is Lymphokine-activated killer T-cell-originated protein kinase (PBK), found in Homo sapiens (Human).